We begin with the raw amino-acid sequence, 375 residues long: Succinyl-diaminopimelate desuccinylase (375 aa).

H66 serves as a coordination point for Zn(2+). D68 is a catalytic residue. D99 contacts Zn(2+). E133 serves as the catalytic Proton acceptor. Zn(2+)-binding residues include E134, E162, and H348.

Belongs to the peptidase M20A family. DapE subfamily. In terms of assembly, homodimer. It depends on Zn(2+) as a cofactor. The cofactor is Co(2+).

It catalyses the reaction N-succinyl-(2S,6S)-2,6-diaminopimelate + H2O = (2S,6S)-2,6-diaminopimelate + succinate. It functions in the pathway amino-acid biosynthesis; L-lysine biosynthesis via DAP pathway; LL-2,6-diaminopimelate from (S)-tetrahydrodipicolinate (succinylase route): step 3/3. Catalyzes the hydrolysis of N-succinyl-L,L-diaminopimelic acid (SDAP), forming succinate and LL-2,6-diaminopimelate (DAP), an intermediate involved in the bacterial biosynthesis of lysine and meso-diaminopimelic acid, an essential component of bacterial cell walls. The sequence is that of Succinyl-diaminopimelate desuccinylase from Yersinia pestis bv. Antiqua (strain Antiqua).